We begin with the raw amino-acid sequence, 852 residues long: Phenylalanine--tRNA ligase beta subunit (852 aa).

The region spanning 44–159 (PETTGPLVIG…DADLASANLK (116 aa)) is the tRNA-binding domain. The 83-residue stretch at 428-510 (PEMPMITIHT…RLEGLEDIPS (83 aa)) folds into the B5 domain. Mg(2+) is bound by residues aspartate 488, aspartate 494, glutamate 497, and glutamate 498. The region spanning 758–851 (SAFPAVLQDI…ATEKVGAQLR (94 aa)) is the FDX-ACB domain.

This sequence belongs to the phenylalanyl-tRNA synthetase beta subunit family. Type 1 subfamily. In terms of assembly, tetramer of two alpha and two beta subunits. Requires Mg(2+) as cofactor.

It localises to the cytoplasm. The catalysed reaction is tRNA(Phe) + L-phenylalanine + ATP = L-phenylalanyl-tRNA(Phe) + AMP + diphosphate + H(+). The sequence is that of Phenylalanine--tRNA ligase beta subunit from Corynebacterium jeikeium (strain K411).